A 239-amino-acid polypeptide reads, in one-letter code: Probable 2-phosphosulfolactate phosphatase (239 aa).

It belongs to the ComB family. It depends on Mg(2+) as a cofactor.

The catalysed reaction is (2R)-O-phospho-3-sulfolactate + H2O = (2R)-3-sulfolactate + phosphate. This chain is Probable 2-phosphosulfolactate phosphatase, found in Clostridium botulinum (strain Langeland / NCTC 10281 / Type F).